The chain runs to 209 residues: Uracil phosphoribosyltransferase (209 aa).

5-phospho-alpha-D-ribose 1-diphosphate contacts are provided by residues R79, R104, and 131-139; that span reads DPMLATGGS. Uracil contacts are provided by residues I194 and 199–201; that span reads GDA. D200 serves as a coordination point for 5-phospho-alpha-D-ribose 1-diphosphate.

Belongs to the UPRTase family. It depends on Mg(2+) as a cofactor.

The enzyme catalyses UMP + diphosphate = 5-phospho-alpha-D-ribose 1-diphosphate + uracil. Its pathway is pyrimidine metabolism; UMP biosynthesis via salvage pathway; UMP from uracil: step 1/1. Its activity is regulated as follows. Allosterically activated by GTP. Its function is as follows. Catalyzes the conversion of uracil and 5-phospho-alpha-D-ribose 1-diphosphate (PRPP) to UMP and diphosphate. The protein is Uracil phosphoribosyltransferase of Clostridium beijerinckii (strain ATCC 51743 / NCIMB 8052) (Clostridium acetobutylicum).